A 316-amino-acid chain; its full sequence is Low affinity immunoglobulin gamma Fc region receptor II-a (316 aa).

Positions 1–35 (MAMETQMSQNVCPRNLWLLQPLTVLLLLASADSQA) are cleaved as a signal peptide. Residues 36-216 (APPKAVLKLE…PSVGSSSPVG (181 aa)) are Extracellular-facing. Ig-like C2-type domains lie at 38 to 117 (PKAV…VHLT) and 121 to 203 (EWLV…VTIT). 2 disulfides stabilise this stretch: Cys-61-Cys-103 and Cys-142-Cys-186. 3 N-linked (GlcNAc...) asparagine glycosylation sites follow: Asn-96, Asn-170, and Asn-177. Residues 217-239 (IIVAVVIATAVAAIVAAVVALIY) form a helical membrane-spanning segment. Topologically, residues 240–316 (CRKKRISANS…PPNDHVNSNN (77 aa)) are cytoplasmic. 2 positions are modified to phosphotyrosine; by SRC-type Tyr-kinases: Tyr-287 and Tyr-303.

Interacts with INPP5D/SHIP1 and INPPL1/SHIP2, regulating its function. Interacts with APCS and FGR. Interacts with HCK. In terms of processing, phosphorylated by SRC-type Tyr-kinases such as HCK, LYN, BLK, FYN and SYK.

The protein resides in the cell membrane. In terms of biological role, binds to the Fc region of immunoglobulins gamma. Low affinity receptor. By binding to IgG it initiates cellular responses against pathogens and soluble antigens. Promotes phagocytosis of opsonized antigens. In Pan troglodytes (Chimpanzee), this protein is Low affinity immunoglobulin gamma Fc region receptor II-a (FCGR2A).